We begin with the raw amino-acid sequence, 741 residues long: Phosphoribosylformylglycinamidine synthase subunit PurL (741 aa).

His-54 is an active-site residue. Tyr-57 and Lys-98 together coordinate ATP. Glu-100 provides a ligand contact to Mg(2+). Residues 101–104 (SHNH) and Arg-123 each bind substrate. The active-site Proton acceptor is the His-102. Asp-124 is a Mg(2+) binding site. A substrate-binding site is contributed by Gln-251. Asp-279 is a binding site for Mg(2+). 323-325 (ESQ) serves as a coordination point for substrate. Asp-510 and Gly-547 together coordinate ATP. A Mg(2+)-binding site is contributed by Asn-548. Ser-550 serves as a coordination point for substrate.

The protein belongs to the FGAMS family. In terms of assembly, monomer. Part of the FGAM synthase complex composed of 1 PurL, 1 PurQ and 2 PurS subunits.

Its subcellular location is the cytoplasm. It catalyses the reaction N(2)-formyl-N(1)-(5-phospho-beta-D-ribosyl)glycinamide + L-glutamine + ATP + H2O = 2-formamido-N(1)-(5-O-phospho-beta-D-ribosyl)acetamidine + L-glutamate + ADP + phosphate + H(+). Its pathway is purine metabolism; IMP biosynthesis via de novo pathway; 5-amino-1-(5-phospho-D-ribosyl)imidazole from N(2)-formyl-N(1)-(5-phospho-D-ribosyl)glycinamide: step 1/2. Part of the phosphoribosylformylglycinamidine synthase complex involved in the purines biosynthetic pathway. Catalyzes the ATP-dependent conversion of formylglycinamide ribonucleotide (FGAR) and glutamine to yield formylglycinamidine ribonucleotide (FGAM) and glutamate. The FGAM synthase complex is composed of three subunits. PurQ produces an ammonia molecule by converting glutamine to glutamate. PurL transfers the ammonia molecule to FGAR to form FGAM in an ATP-dependent manner. PurS interacts with PurQ and PurL and is thought to assist in the transfer of the ammonia molecule from PurQ to PurL. This Picrophilus torridus (strain ATCC 700027 / DSM 9790 / JCM 10055 / NBRC 100828 / KAW 2/3) protein is Phosphoribosylformylglycinamidine synthase subunit PurL.